Reading from the N-terminus, the 323-residue chain is Beta-ketoacyl-[acyl-carrier-protein] synthase III (323 aa).

Residues Cys113 and His250 contribute to the active site. The interval 251–255 is ACP-binding; that stretch reads QANKR. Asn280 is a catalytic residue.

Belongs to the thiolase-like superfamily. FabH family. In terms of assembly, homodimer.

The protein resides in the cytoplasm. The enzyme catalyses malonyl-[ACP] + acetyl-CoA + H(+) = 3-oxobutanoyl-[ACP] + CO2 + CoA. It functions in the pathway lipid metabolism; fatty acid biosynthesis. Functionally, catalyzes the condensation reaction of fatty acid synthesis by the addition to an acyl acceptor of two carbons from malonyl-ACP. Catalyzes the first condensation reaction which initiates fatty acid synthesis and may therefore play a role in governing the total rate of fatty acid production. Possesses both acetoacetyl-ACP synthase and acetyl transacylase activities. Its substrate specificity determines the biosynthesis of branched-chain and/or straight-chain of fatty acids. The sequence is that of Beta-ketoacyl-[acyl-carrier-protein] synthase III from Mesorhizobium japonicum (strain LMG 29417 / CECT 9101 / MAFF 303099) (Mesorhizobium loti (strain MAFF 303099)).